The chain runs to 280 residues: Pantothenate synthetase (280 aa).

26 to 33 (MGNLHDGH) serves as a coordination point for ATP. The active-site Proton donor is His33. (R)-pantoate is bound at residue Gln57. Gln57 contributes to the beta-alanine binding site. 147–150 (GKKD) is an ATP binding site. Gln153 provides a ligand contact to (R)-pantoate. 184–187 (LSSR) contributes to the ATP binding site.

The protein belongs to the pantothenate synthetase family. Homodimer.

It localises to the cytoplasm. The catalysed reaction is (R)-pantoate + beta-alanine + ATP = (R)-pantothenate + AMP + diphosphate + H(+). It participates in cofactor biosynthesis; (R)-pantothenate biosynthesis; (R)-pantothenate from (R)-pantoate and beta-alanine: step 1/1. Functionally, catalyzes the condensation of pantoate with beta-alanine in an ATP-dependent reaction via a pantoyl-adenylate intermediate. This chain is Pantothenate synthetase, found in Verminephrobacter eiseniae (strain EF01-2).